The sequence spans 286 residues: Phosphatidylserine decarboxylase proenzyme (286 aa).

Catalysis depends on charge relay system; for autoendoproteolytic cleavage activity residues Asp89, His146, and Ser252. Ser252 acts as the Schiff-base intermediate with substrate; via pyruvic acid; for decarboxylase activity in catalysis. The residue at position 252 (Ser252) is a Pyruvic acid (Ser); by autocatalysis.

This sequence belongs to the phosphatidylserine decarboxylase family. PSD-B subfamily. Prokaryotic type I sub-subfamily. As to quaternary structure, heterodimer of a large membrane-associated beta subunit and a small pyruvoyl-containing alpha subunit. The cofactor is pyruvate. Post-translationally, is synthesized initially as an inactive proenzyme. Formation of the active enzyme involves a self-maturation process in which the active site pyruvoyl group is generated from an internal serine residue via an autocatalytic post-translational modification. Two non-identical subunits are generated from the proenzyme in this reaction, and the pyruvate is formed at the N-terminus of the alpha chain, which is derived from the carboxyl end of the proenzyme. The autoendoproteolytic cleavage occurs by a canonical serine protease mechanism, in which the side chain hydroxyl group of the serine supplies its oxygen atom to form the C-terminus of the beta chain, while the remainder of the serine residue undergoes an oxidative deamination to produce ammonia and the pyruvoyl prosthetic group on the alpha chain. During this reaction, the Ser that is part of the protease active site of the proenzyme becomes the pyruvoyl prosthetic group, which constitutes an essential element of the active site of the mature decarboxylase.

The protein resides in the cell membrane. The catalysed reaction is a 1,2-diacyl-sn-glycero-3-phospho-L-serine + H(+) = a 1,2-diacyl-sn-glycero-3-phosphoethanolamine + CO2. It functions in the pathway phospholipid metabolism; phosphatidylethanolamine biosynthesis; phosphatidylethanolamine from CDP-diacylglycerol: step 2/2. In terms of biological role, catalyzes the formation of phosphatidylethanolamine (PtdEtn) from phosphatidylserine (PtdSer). In Shewanella loihica (strain ATCC BAA-1088 / PV-4), this protein is Phosphatidylserine decarboxylase proenzyme.